Consider the following 169-residue polypeptide: Photosystem I assembly protein Ycf3 (169 aa).

TPR repeat units lie at residues 36-69, 73-106, and 121-154; these read AFTYYRDGMSAQSEGNYAEALQNYYEAMRLEIDP, SYILYNIGLIHTRNGEHTKALEYYFRALERNPFL, and GEQAIRQGDSEIAEAWFNQAAEYWKQAIALTPGN.

This sequence belongs to the Ycf3 family.

The protein resides in the plastid. Its subcellular location is the chloroplast thylakoid membrane. Its function is as follows. Essential for the assembly of the photosystem I (PSI) complex. May act as a chaperone-like factor to guide the assembly of the PSI subunits. The protein is Photosystem I assembly protein Ycf3 of Cucumis sativus (Cucumber).